We begin with the raw amino-acid sequence, 361 residues long: Histidinol-phosphate aminotransferase (361 aa).

An N6-(pyridoxal phosphate)lysine modification is found at K219.

Belongs to the class-II pyridoxal-phosphate-dependent aminotransferase family. Histidinol-phosphate aminotransferase subfamily. As to quaternary structure, homodimer. The cofactor is pyridoxal 5'-phosphate.

It carries out the reaction L-histidinol phosphate + 2-oxoglutarate = 3-(imidazol-4-yl)-2-oxopropyl phosphate + L-glutamate. It functions in the pathway amino-acid biosynthesis; L-histidine biosynthesis; L-histidine from 5-phospho-alpha-D-ribose 1-diphosphate: step 7/9. The sequence is that of Histidinol-phosphate aminotransferase from Cereibacter sphaeroides (strain ATCC 17029 / ATH 2.4.9) (Rhodobacter sphaeroides).